We begin with the raw amino-acid sequence, 365 residues long: Chaperone protein DnaJ (365 aa).

A J domain is found at 4 to 70 (DYYKILGVDR…EKRRIYDQTG (67 aa)). The segment at 139–220 (GTEKRIKFRR…CNGTGTIVVD (82 aa)) adopts a CR-type zinc-finger fold. Residues cysteine 152, cysteine 155, cysteine 168, cysteine 171, cysteine 194, cysteine 197, cysteine 208, and cysteine 211 each contribute to the Zn(2+) site. CXXCXGXG motif repeat units follow at residues 152–159 (CPDCKGTG), 168–175 (CPTCHGTG), 194–201 (CNTCGGKG), and 208–215 (CPRCNGTG).

This sequence belongs to the DnaJ family. Homodimer. Zn(2+) is required as a cofactor.

It localises to the cytoplasm. Functionally, participates actively in the response to hyperosmotic and heat shock by preventing the aggregation of stress-denatured proteins and by disaggregating proteins, also in an autonomous, DnaK-independent fashion. Unfolded proteins bind initially to DnaJ; upon interaction with the DnaJ-bound protein, DnaK hydrolyzes its bound ATP, resulting in the formation of a stable complex. GrpE releases ADP from DnaK; ATP binding to DnaK triggers the release of the substrate protein, thus completing the reaction cycle. Several rounds of ATP-dependent interactions between DnaJ, DnaK and GrpE are required for fully efficient folding. Also involved, together with DnaK and GrpE, in the DNA replication of plasmids through activation of initiation proteins. This Thermoplasma volcanium (strain ATCC 51530 / DSM 4299 / JCM 9571 / NBRC 15438 / GSS1) protein is Chaperone protein DnaJ.